The chain runs to 234 residues: Large ribosomal subunit protein uL1 (234 aa).

The protein belongs to the universal ribosomal protein uL1 family. Part of the 50S ribosomal subunit.

Binds directly to 23S rRNA. The L1 stalk is quite mobile in the ribosome, and is involved in E site tRNA release. Functionally, protein L1 is also a translational repressor protein, it controls the translation of the L11 operon by binding to its mRNA. The polypeptide is Large ribosomal subunit protein uL1 (Helicobacter pylori (strain Shi470)).